The following is a 205-amino-acid chain: Heme-binding protein 2 (205 aa).

Positions 1 to 37 (MAEEPEPDLGVAEGSEDQALEMPSWKAPEDIDPQPGS) are disordered. Ala-2 is modified (N-acetylalanine). The residue at position 181 (Ser-181) is a Phosphoserine.

It belongs to the HEBP family. As to quaternary structure, monomer. Interacts with LRPPRC. May interact with BCL2L1; an interaction with BCL2L1 was observed using a peptide, but not with the full-length protein. The full-length protein would have to undergo a major conformation change for the interaction to occur. Interacts with PDCD6.

The protein localises to the cytoplasm. Its subcellular location is the mitochondrion. Can promote mitochondrial permeability transition and facilitate necrotic cell death under different types of stress conditions. May have low affinity for heme. The protein is Heme-binding protein 2 (Hebp2) of Mus musculus (Mouse).